We begin with the raw amino-acid sequence, 233 residues long: MAKLTKRMRVIREKVDGTKLYEINDAVALLKELATAKFVESVDVAVNLGIDPRKSDQNVRGATVLPHGTGRDVRVAVFTQGANAEAAKAAGAELVGMDDLAEKIKAGEMNFDVVIASPDAMRVVGMLGQILGPRGLMPNPKTGTVTPNVAEAVKNAKAGQVRYRNDKNGIIHTTIGKVDFTPVQLKENLEALISALKKAKPAVAKGVYVKKVSISTTMGAGVAVDQASLETAN.

Belongs to the universal ribosomal protein uL1 family. As to quaternary structure, part of the 50S ribosomal subunit.

Functionally, binds directly to 23S rRNA. The L1 stalk is quite mobile in the ribosome, and is involved in E site tRNA release. Protein L1 is also a translational repressor protein, it controls the translation of the L11 operon by binding to its mRNA. The chain is Large ribosomal subunit protein uL1 from Shewanella oneidensis (strain ATCC 700550 / JCM 31522 / CIP 106686 / LMG 19005 / NCIMB 14063 / MR-1).